We begin with the raw amino-acid sequence, 571 residues long: Acetolactate synthase large subunit (571 aa).

Glu51 is a binding site for thiamine diphosphate. FAD contacts are provided by residues Arg153, 261 to 282 (HGTY…IGVR), and 304 to 323 (DIDP…IVGD). The segment at 394 to 474 (QHQMFTALYY…VLILNLNNSS (81 aa)) is thiamine pyrophosphate binding. Mg(2+) contacts are provided by Asp445 and Asn472.

The protein belongs to the TPP enzyme family. As to quaternary structure, dimer of large and small chains. Mg(2+) is required as a cofactor. The cofactor is thiamine diphosphate.

The catalysed reaction is 2 pyruvate + H(+) = (2S)-2-acetolactate + CO2. It functions in the pathway amino-acid biosynthesis; L-isoleucine biosynthesis; L-isoleucine from 2-oxobutanoate: step 1/4. Its pathway is amino-acid biosynthesis; L-valine biosynthesis; L-valine from pyruvate: step 1/4. The polypeptide is Acetolactate synthase large subunit (ilvI) (Buchnera aphidicola subsp. Acyrthosiphon pisum (strain APS) (Acyrthosiphon pisum symbiotic bacterium)).